The following is a 454-amino-acid chain: UDP-N-acetylmuramoylalanine--D-glutamate ligase (454 aa).

115 to 121 lines the ATP pocket; that stretch reads GTNGKTT.

This sequence belongs to the MurCDEF family.

The protein resides in the cytoplasm. The enzyme catalyses UDP-N-acetyl-alpha-D-muramoyl-L-alanine + D-glutamate + ATP = UDP-N-acetyl-alpha-D-muramoyl-L-alanyl-D-glutamate + ADP + phosphate + H(+). The protein operates within cell wall biogenesis; peptidoglycan biosynthesis. In terms of biological role, cell wall formation. Catalyzes the addition of glutamate to the nucleotide precursor UDP-N-acetylmuramoyl-L-alanine (UMA). This Thermoanaerobacter sp. (strain X514) protein is UDP-N-acetylmuramoylalanine--D-glutamate ligase.